Here is a 633-residue protein sequence, read N- to C-terminus: Chaperone protein DnaK (633 aa).

A Phosphothreonine; by autocatalysis modification is found at Thr198.

Belongs to the heat shock protein 70 family.

Acts as a chaperone. This is Chaperone protein DnaK from Rhodopseudomonas palustris (strain BisA53).